Reading from the N-terminus, the 491-residue chain is Beta-galactosidase (491 aa).

Glu209 functions as the Proton donor in the catalytic mechanism. The active-site Nucleophile is Glu389.

The protein belongs to the glycosyl hydrolase 1 family.

It catalyses the reaction Hydrolysis of terminal non-reducing beta-D-galactose residues in beta-D-galactosides.. This chain is Beta-galactosidase (bgaS), found in Sulfolobus acidocaldarius (strain ATCC 33909 / DSM 639 / JCM 8929 / NBRC 15157 / NCIMB 11770).